An 856-amino-acid chain; its full sequence is Inactive rhomboid protein 1 (856 aa).

The disordered stretch occupies residues 1–20 (MSEARRDSTSSLQRKKPPWL). The Cytoplasmic segment spans residues 1 to 412 (MSEARRDSTS…HRPFFTYWLT (412 aa)). S76 and S176 each carry phosphoserine. Phosphothreonine is present on residues T180 and T183. A Phosphoserine modification is found at S391. The helical transmembrane segment at 413 to 433 (FVHSLVTILAVCIYGIAPVGF) threads the bilayer. Residues 434-656 (SQHETVDSVL…NPEVPDQFYR (223 aa)) lie on the Lumenal side of the membrane. N584 carries N-linked (GlcNAc...) asparagine glycosylation. A helical membrane pass occupies residues 657 to 677 (LWLSLFLHAGILHCLVSVCFQ). Topologically, residues 678–692 (MTVLRDLEKLAGWHR) are cytoplasmic. A helical transmembrane segment spans residues 693 to 713 (IAIIYLLSGVTGNLASAIFLP). Residues 714 to 715 (YR) are Lumenal-facing. A helical transmembrane segment spans residues 716-736 (AEVGPAGSQFGILACLFVELF). The Cytoplasmic portion of the chain corresponds to 737–747 (QSWQILARPWR). The helical transmembrane segment at 748–768 (AFFKLLAVVLFLFAFGLLPWI) threads the bilayer. Topologically, residues 769 to 773 (DNFAH) are lumenal. A helical membrane pass occupies residues 774-794 (ISGFVSGLFLSFAFLPYISFG). At 795–804 (KFDLYRKRCQ) the chain is on the cytoplasmic side. Residues 805–825 (IIIFQAVFLGLLAGLVVLFYF) traverse the membrane as a helical segment. The Lumenal portion of the chain corresponds to 826 to 856 (YPVRCEWCEFLTCIPFTDKFCEKYELDAQLH).

The protein belongs to the peptidase S54 family. In terms of assembly, homodimer, or homooligomer. Interacts with TGFA and HBEGF. Interacts with EGF; may retain EGF in the endoplasmic reticulum and regulates its degradation through the endoplasmic reticulum-associated degradation (ERAD). Interacts (via cytoplasmic N-terminus) with FRMD8/iTAP; this interaction leads to mutual protein stabilization. Interacts with ADAM17/TACE.

Its subcellular location is the endoplasmic reticulum membrane. The protein localises to the golgi apparatus membrane. Its function is as follows. Regulates ADAM17 protease, a sheddase of the epidermal growth factor (EGF) receptor ligands and TNF, thereby plays a role in sleep, cell survival, proliferation, migration and inflammation. Does not exhibit any protease activity on its own. The chain is Inactive rhomboid protein 1 (Rhbdf1) from Rattus norvegicus (Rat).